A 468-amino-acid polypeptide reads, in one-letter code: Soluble pyridine nucleotide transhydrogenase (468 aa).

Residue 36-45 (ERYKNVGGGC) coordinates FAD.

The protein belongs to the class-I pyridine nucleotide-disulfide oxidoreductase family. FAD serves as cofactor.

It is found in the cytoplasm. It carries out the reaction NAD(+) + NADPH = NADH + NADP(+). In terms of biological role, conversion of NADPH, generated by peripheral catabolic pathways, to NADH, which can enter the respiratory chain for energy generation. This chain is Soluble pyridine nucleotide transhydrogenase, found in Hamiltonella defensa subsp. Acyrthosiphon pisum (strain 5AT).